A 369-amino-acid polypeptide reads, in one-letter code: Histidinol-phosphate aminotransferase 3 (369 aa).

K220 carries the post-translational modification N6-(pyridoxal phosphate)lysine.

The protein belongs to the class-II pyridoxal-phosphate-dependent aminotransferase family. Histidinol-phosphate aminotransferase subfamily. As to quaternary structure, homodimer. Requires pyridoxal 5'-phosphate as cofactor.

The catalysed reaction is L-histidinol phosphate + 2-oxoglutarate = 3-(imidazol-4-yl)-2-oxopropyl phosphate + L-glutamate. It functions in the pathway amino-acid biosynthesis; L-histidine biosynthesis; L-histidine from 5-phospho-alpha-D-ribose 1-diphosphate: step 7/9. This chain is Histidinol-phosphate aminotransferase 3 (hisC3), found in Mesorhizobium japonicum (strain LMG 29417 / CECT 9101 / MAFF 303099) (Mesorhizobium loti (strain MAFF 303099)).